Here is a 394-residue protein sequence, read N- to C-terminus: Peroxisomal membrane protein PEX25 (394 aa).

A compositionally biased stretch (polar residues) spans Met-1–Asp-25. Positions Met-1–Ala-65 are disordered. The Cytoplasmic segment spans residues Met-1–Tyr-366. Residues Ser-51–Ala-65 show a composition bias toward basic and acidic residues. Phosphoserine occurs at positions 58, 63, and 289. Residues Ala-367–Ile-383 form a helical membrane-spanning segment. The Lumenal segment spans residues Thr-384–Asp-394.

As to quaternary structure, homooligomer. Interacts with PEX27 and PEX34.

Its subcellular location is the peroxisome membrane. Functionally, required for regulation of peroxisome size and maintenance. Has a role in the import of peroxisomal matrix proteins. Imports RHO1 into the peroxisome. Also promotes peroxisome division and biogenesis. This is Peroxisomal membrane protein PEX25 (PEX25) from Saccharomyces cerevisiae (strain ATCC 204508 / S288c) (Baker's yeast).